We begin with the raw amino-acid sequence, 199 residues long: DNA dC-&gt;dU-editing enzyme APOBEC-3A (199 aa).

Residues 27–143 form the CMP/dCMP-type deaminase domain; sequence GRHKTYLCYE…PLYKEALQML (117 aa). H70 is a Zn(2+) binding site. The active-site Proton donor is E72. C101 and C106 together coordinate Zn(2+).

The protein belongs to the cytidine and deoxycytidylate deaminase family. Interacts with AGO2. Interacts with TRIB3 (via N-terminus). Zn(2+) serves as cofactor. As to expression, expressed in peripheral leukocytes with higher expression in CD14-positive phagocytic cells. Highly expressed in keratinocytes and in periphery blood monocytes. Also detected in non-lymphoid tissues including lung and adipose tissues. Found at high levels in colorectal adenocarcinoma, Burkitt's lymphoma and chronic myelogenous leukemia.

The protein resides in the nucleus. The protein localises to the cytoplasm. The catalysed reaction is a 2'-deoxycytidine in single-stranded DNA + H2O + H(+) = a 2'-deoxyuridine in single-stranded DNA + NH4(+). Its function is as follows. DNA deaminase (cytidine deaminase) with restriction activity against viruses, foreign DNA and mobility of retrotransposons. Exhibits antiviral activity against adeno-associated virus (AAV) and human T-cell leukemia virus type 1 (HTLV-1) and may inhibit the mobility of LTR and non-LTR retrotransposons. Selectively targets single-stranded DNA and can deaminate both methylcytosine and cytosine in foreign DNA. Can induce somatic hypermutation in the nuclear and mitochondrial DNA. May also play a role in the epigenetic regulation of gene expression through the process of active DNA demethylation. The protein is DNA dC-&gt;dU-editing enzyme APOBEC-3A (APOBEC3A) of Homo sapiens (Human).